A 65-amino-acid polypeptide reads, in one-letter code: Alpha-conotoxine-like Am1.5 (65 aa).

The N-terminal stretch at Met1–Ser21 is a signal peptide. The propeptide occupies Phe22–Arg46. A 4-carboxyglutamate modification is found at Glu49. The interval Ser52–Pro54 is ser-Xaa-Pro motif, crucial for potent interaction with nAChR. 4-hydroxyproline is present on residues Pro54 and Pro61. A 4-carboxyglutamate modification is found at Glu62.

It belongs to the conotoxin A superfamily. Contains 2 disulfide bonds. As to expression, expressed by the venom duct.

The protein localises to the secreted. Its function is as follows. Alpha-conotoxins act on postsynaptic membranes, they bind to the nicotinic acetylcholine receptors (nAChR) and thus inhibit them. The chain is Alpha-conotoxine-like Am1.5 from Conus amadis (Amadis cone).